The following is a 343-amino-acid chain: Programmed cell death protein 2 (343 aa).

8 residues coordinate Zn(2+): C134, C137, C145, C148, C154, H158, H167, and C171. Residues 134 to 171 form an MYND-type; atypical zinc finger; the sequence is CRVCGCLAPMTCSRCKQAHYCSKEHQTLDWRLGHKQAC.

In terms of processing, ubiquitinated by PRKN, promoting proteasomal degradation.

Its subcellular location is the nucleus. May be a DNA-binding protein with a regulatory function. May play an important role in cell death and/or in regulation of cell proliferation. This Mus musculus (Mouse) protein is Programmed cell death protein 2 (Pdcd2).